Reading from the N-terminus, the 199-residue chain is Auxin-responsive protein IAA1 (199 aa).

The EAR-like (transcriptional repression) motif lies at 25–29 (LTLRL). Residues 31–74 (GSLAAAAAPDPDRKRSSPSSSDAADAADNSSPLAAAADAPPAPK) are disordered. The span at 47–69 (SPSSSDAADAADNSSPLAAAADA) shows a compositional bias: low complexity. One can recognise a PB1 domain in the interval 93–187 (AKFVKVAVDG…TCQRLRLMKS (95 aa)).

The protein belongs to the Aux/IAA family. As to quaternary structure, homodimers and heterodimers. As to expression, highly expressed in flowers. Expressed at low levels in roots and shoots.

Its subcellular location is the nucleus. Its function is as follows. Aux/IAA proteins are short-lived transcriptional factors that function as repressors of early auxin response genes at low auxin concentrations. The protein is Auxin-responsive protein IAA1 (IAA1) of Oryza sativa subsp. japonica (Rice).